A 193-amino-acid polypeptide reads, in one-letter code: Cytidylate kinase (193 aa).

Position 12–20 (12–20 (GLAGSGTTT)) interacts with ATP.

The protein belongs to the cytidylate kinase family. Type 2 subfamily.

The protein resides in the cytoplasm. The enzyme catalyses CMP + ATP = CDP + ADP. The catalysed reaction is dCMP + ATP = dCDP + ADP. In Thermococcus kodakarensis (strain ATCC BAA-918 / JCM 12380 / KOD1) (Pyrococcus kodakaraensis (strain KOD1)), this protein is Cytidylate kinase.